Here is a 557-residue protein sequence, read N- to C-terminus: MRVLPAAMLVGAATAAVPPFQQVLGGNGAKHGADHAAEVPADHSADGFSKPLHAFQEELKSLSDEARKLWDEVASFFPESMDQNPLFSLPKKHNRRPDSHWDHIVRGSDVQSVWVTGENGEKEREVDGKLEAYDLRVKKTDPGSLGIDPGVKQYTGYLDDNENDKHLFYWFFESRNDPENDPVVLWLNGGPGCSSLTGLFMELGPSSINKKIQPVYNDYAWNSNASVIFLDQPVNVGYSYSNSAVSDTVAAGKDVYALLTLFFKQFPEYAKQDFHIAGESYAGHYIPVFASEILSHKKRNINLQSVLIGNGLTDGYTQYEYYRPMACGDGGYPAVLDESSCQSMDNALPRCQSMIESCYSSESAWVCVPASIYCNNALLAPYQRTGQNVYDVRGKCEDSSNLCYSAMGYVSDYLNKPEVIEAVGAEVNGYDSCNFDINRNFLFHGDWMKPYHRLVPGLLEQIPVLIYAGDADFICNWLGNKAWTEALEWPGQAEYASAELEDLVIVDNEHTGKKIGQVKSHGNFTFMRLYGGGHMVPMDQPESSLEFFNRWLGGEWF.

Positions 1–17 (MRVLPAAMLVGAATAAV) are cleaved as a signal peptide. The propeptide occupies 18–138 (PPFQQVLGGN…KLEAYDLRVK (121 aa)). Cystine bridges form between Cys193-Cys433, Cys327-Cys341, Cys351-Cys374, Cys358-Cys367, and Cys396-Cys403. N-linked (GlcNAc...) asparagine glycosylation occurs at Asn224. The active site involves Ser280. The active site involves Asp472. N-linked (GlcNAc...) asparagine glycosylation occurs at Asn523. His534 is a catalytic residue.

This sequence belongs to the peptidase S10 family.

The protein localises to the vacuole. It catalyses the reaction Release of a C-terminal amino acid with broad specificity.. Its function is as follows. Vacuolar carboxypeptidase involved in degradation of small peptides. Digests preferentially peptides containing an aliphatic or hydrophobic residue in P1' position, as well as methionine, leucine or phenylalanine in P1 position of ester substrate. The sequence is that of Carboxypeptidase Y homolog A (cpyA) from Aspergillus niger (strain ATCC MYA-4892 / CBS 513.88 / FGSC A1513).